Consider the following 214-residue polypeptide: Large ribosomal subunit protein uL3 (214 aa).

Positions 134 to 161 (THGNSLSHRAPGSIGQCQTPGRVMKGKK) are disordered. Gln151 bears the N5-methylglutamine mark.

The protein belongs to the universal ribosomal protein uL3 family. In terms of assembly, part of the 50S ribosomal subunit. Forms a cluster with proteins L14 and L19. Post-translationally, methylated by PrmB.

Functionally, one of the primary rRNA binding proteins, it binds directly near the 3'-end of the 23S rRNA, where it nucleates assembly of the 50S subunit. The chain is Large ribosomal subunit protein uL3 from Teredinibacter turnerae (strain ATCC 39867 / T7901).